The following is a 371-amino-acid chain: Large ribosomal subunit protein bL27m (371 aa).

The transit peptide at 1-27 directs the protein to the mitochondrion; sequence MWNPILLDTSSFSFQKHVSGVFLQVRN.

It belongs to the bacterial ribosomal protein bL27 family. As to quaternary structure, component of the mitochondrial large ribosomal subunit (mt-LSU). Mature yeast 74S mitochondrial ribosomes consist of a small (37S) and a large (54S) subunit. The 37S small subunit contains a 15S ribosomal RNA (15S mt-rRNA) and 34 different proteins. The 54S large subunit contains a 21S rRNA (21S mt-rRNA) and 46 different proteins.

The protein resides in the mitochondrion. Component of the mitochondrial ribosome (mitoribosome), a dedicated translation machinery responsible for the synthesis of mitochondrial genome-encoded proteins, including at least some of the essential transmembrane subunits of the mitochondrial respiratory chain. The mitoribosomes are attached to the mitochondrial inner membrane and translation products are cotranslationally integrated into the membrane. In Saccharomyces cerevisiae (strain ATCC 204508 / S288c) (Baker's yeast), this protein is Large ribosomal subunit protein bL27m (MRP7).